A 308-amino-acid chain; its full sequence is ADP-L-glycero-D-manno-heptose-6-epimerase (308 aa).

NADP(+) contacts are provided by residues 10–11 (MI), 31–32 (DN), K38, K53, 75–79 (EGACS), and N92. Y139 acts as the Proton acceptor in catalysis. NADP(+) is bound at residue K143. Position 168 (N168) interacts with substrate. NADP(+) contacts are provided by V169 and K177. The Proton acceptor role is filled by K177. Substrate contacts are provided by residues S179, H186, 200–203 (FAGS), R208, and Y271.

The protein belongs to the NAD(P)-dependent epimerase/dehydratase family. HldD subfamily. Homopentamer. Requires NADP(+) as cofactor.

The catalysed reaction is ADP-D-glycero-beta-D-manno-heptose = ADP-L-glycero-beta-D-manno-heptose. Its pathway is nucleotide-sugar biosynthesis; ADP-L-glycero-beta-D-manno-heptose biosynthesis; ADP-L-glycero-beta-D-manno-heptose from D-glycero-beta-D-manno-heptose 7-phosphate: step 4/4. In terms of biological role, catalyzes the interconversion between ADP-D-glycero-beta-D-manno-heptose and ADP-L-glycero-beta-D-manno-heptose via an epimerization at carbon 6 of the heptose. This chain is ADP-L-glycero-D-manno-heptose-6-epimerase, found in Mannheimia succiniciproducens (strain KCTC 0769BP / MBEL55E).